The sequence spans 143 residues: Cytochrome c-type biogenesis protein CcmE (143 aa).

Residues 1 to 8 (MNPVRRRK) lie on the Cytoplasmic side of the membrane. Residues 9–29 (LFILLFALTILSAAAALVLYA) traverse the membrane as a helical; Signal-anchor for type II membrane protein segment. Over 30-143 (LRQNISLFYT…KSALADKVKQ (114 aa)) the chain is Periplasmic. Heme-binding residues include His124 and Tyr128.

It belongs to the CcmE/CycJ family.

The protein localises to the cell inner membrane. Functionally, heme chaperone required for the biogenesis of c-type cytochromes. Transiently binds heme delivered by CcmC and transfers the heme to apo-cytochromes in a process facilitated by CcmF and CcmH. The chain is Cytochrome c-type biogenesis protein CcmE from Legionella pneumophila (strain Corby).